The following is a 342-amino-acid chain: Ankyrin repeat domain-containing protein 2A (342 aa).

The interval 1–41 (MASNSEKNPLLSDEKPKSTEENKSSKPESASGSSTSSAMPG) is disordered. A compositionally biased stretch (basic and acidic residues) spans 12 to 26 (SDEKPKSTEENKSSK). A compositionally biased stretch (low complexity) spans 27–37 (PESASGSSTSS). ANK repeat units follow at residues 217–246 (EEES…NKDE), 250–279 (EGRT…SVNA), 283–312 (NKNT…AVTL), and 316–342 (DEKT…DAFL). His223 and Glu246 together coordinate a 1,2-diacyl-3-O-(beta-D-galactosyl)-sn-glycerol. Residues Tyr294 and Arg296 each coordinate a 1,2-diacyl-sn-glycero-3-phospho-(1'-sn-glycerol).

Interacts with TOM20-4, CYTB5-E, CBR1, APX3, APX5, TOC34 and GRF6. Binds to chloroplast outer envelope membrane (OEM) protein targeting signals, as well as to chloroplasts. Interacts with OEP7. Binds to HSP17.8 via its ankyrin repeats, this interaction enhances chaperone activity and chloroplast binding. Also interacts with HSP17.4A, HSP17.6A and HSP18.1. Binds specifically to two chloroplast glycolipids, monogalactosyldiacylglycerol (MGDG) and phosphatidylglycerol (PG). In terms of tissue distribution, ubiquitously expressed at basal level.

Its subcellular location is the cytoplasm. It localises to the nucleus. The protein localises to the plastid. The protein resides in the chloroplast outer membrane. In terms of biological role, exhibits chaperone activity toward chloroplast outer envelope membrane, mitochondrion outer membrane, endoplasmic reticulum membrane and peroxisomal proteins, by recruiting specific proteins containing a single transmembrane associated with an AKR2A-binding sequence (ABS) and subsequently binding glycolipids (e.g. monogalactosyldiacylglycerol (MGDG) and phosphatidylglycerol (PG)) present in the membrane of the target organelle. Seems to be involved in the regulation of hydrogen peroxide levels during biotic and abiotic stresses by optimizing the ascorbate peroxidase 3 (APX3) hydrogen peroxide-degrading activity. This regulation might be monitored by GRF6. Cytosolic targeting factor for chloroplast outer membrane (COM) proteins that mediates sorting and targeting of nascent chloroplast outer envelope membrane (OEM) proteins to the chloroplast. Facilitates the targeting of OEP7 to chloroplasts. Facilitates the targeting of APX3 to peroxisomes. Involved in cellular metabolism (e.g. peroxisome activity) and required for plant growth and development. This Arabidopsis thaliana (Mouse-ear cress) protein is Ankyrin repeat domain-containing protein 2A.